The chain runs to 66 residues: Surface composition regulator (66 aa).

It belongs to the GlgS family.

Functionally, major determinant of cell surface composition. Negatively regulates motility, adhesion and synthesis of biofilm exopolysaccharides. The chain is Surface composition regulator from Escherichia coli O139:H28 (strain E24377A / ETEC).